We begin with the raw amino-acid sequence, 864 residues long: Leucine--tRNA ligase (864 aa).

A 'HIGH' region motif is present at residues 50–60 (PYPSGKIHMGH). The short motif at 622-626 (KMSKS) is the 'KMSKS' region element. ATP is bound at residue Lys-625.

This sequence belongs to the class-I aminoacyl-tRNA synthetase family.

It localises to the cytoplasm. It carries out the reaction tRNA(Leu) + L-leucine + ATP = L-leucyl-tRNA(Leu) + AMP + diphosphate. This Acidiphilium cryptum (strain JF-5) protein is Leucine--tRNA ligase.